Here is a 282-residue protein sequence, read N- to C-terminus: uncharacterized protein (282 aa).

This is an uncharacterized protein from Escherichia coli (strain K12).